The sequence spans 651 residues: MGQIFSRSASPIPRPPRGLAAHHWLNFLQAAYRLEPGPSSYDFHQLKKFLKIALETPVWICPINYSLLASLLPKGYPGRVNEILHILIQTQAQIPSRPAPPPPSSSTHDPPDSDPQIPPPYVEPTAPQVLPVMHPHGAPPNHRPWQMKDLQAIKQEVSQAAPGSPQFMQTIRLAVQQFDPTAKDLQDLLQYLCSSLVASLHHQQLDSLISEAETRGITGYNPLAGPLRVQANNPQQQGLRREYQQLWLAAFAALPGSAKDPSWASILQGLEEPYHAFVERLNIALDNGLPEGTPKDPILRSLAYSNANKECQKLLQARGHTNSPLGDMLRACQAWTPKDKTKVLVVQPKKPPPNQPCFRCGKAGHWSRDCTQPRPPPGPCPLCQDPTHWKRDCPRLKPTIPEPEPEEDALLLDLPADIPHPKNLHRGGGLTSPPTLQQVLPNQDPTSILPVIPLDPARRPVIKAQIDTQTSHPKTIEALLDTGADMTVLPIALFSSNTPLKNTSVLGAGGQTQDHFKLTSLPVLIRLPFRTTPIVLTSCLVDTKNNWAIIGRDALQQCQGVLYLPEAKRPPVILPIQAPAVLGLEHLPRPPEISQFPLNQNASRPCNTWSGRPWRQAISNPTPGQEITQYSQLKKPMEPGDSSTTCGPLTL.

Gly2 carries the N-myristoyl glycine; by host lipid modification. A disordered region spans residues 93 to 142 (QIPSRPAPPPPSSSTHDPPDSDPQIPPPYVEPTAPQVLPVMHPHGAPPNH). Residue Ser105 is modified to Phosphoserine; by host MAPK1. The short motif at 118–121 (PPPY) is the PPXY motif element. Residues 124-127 (PTAP) carry the PTAP/PSAP motif motif. 2 consecutive CCHC-type zinc fingers follow at residues 355 to 372 (QPCFRCGKAGHWSRDCTQ) and 378 to 395 (GPCPLCQDPTHWKRDCPR). The 79-residue stretch at 476-554 (IEALLDTGAD…NNWAIIGRDA (79 aa)) folds into the Peptidase A2 domain. The active-site For protease activity; shared with dimeric partner is the Asp481. The segment at 631–651 (SQLKKPMEPGDSSTTCGPLTL) is disordered. Over residues 641 to 651 (DSSTTCGPLTL) the composition is skewed to polar residues.

In terms of assembly, homodimer; the homodimers are part of the immature particles. Interacts with human TSG101 and NEDD4; these interactions are essential for budding and release of viral particles. Homodimer; further assembles as homohexamers. Specific enzymatic cleavages by the viral protease yield mature proteins. The polyprotein is cleaved during and after budding, this process is termed maturation. The protease is autoproteolytically processed at its N- and C-termini. Post-translationally, phosphorylation of the matrix protein p19 by MAPK1 seems to play a role in budding. In terms of processing, myristoylated. Myristoylation of the matrix (MA) domain mediates the transport and binding of Gag polyproteins to the host plasma membrane and is required for the assembly of viral particles.

The protein resides in the virion. The matrix domain targets Gag, Gag-Pro and Gag-Pro-Pol polyproteins to the plasma membrane via a multipartite membrane binding signal, that includes its myristoylated N-terminus. In terms of biological role, matrix protein. Its function is as follows. Forms the spherical core of the virus that encapsulates the genomic RNA-nucleocapsid complex. Functionally, binds strongly to viral nucleic acids and promote their aggregation. Also destabilizes the nucleic acids duplexes via highly structured zinc-binding motifs. The aspartyl protease mediates proteolytic cleavages of Gag and Gag-Pol polyproteins during or shortly after the release of the virion from the plasma membrane. Cleavages take place as an ordered, step-wise cascade to yield mature proteins. This process is called maturation. Displays maximal activity during the budding process just prior to particle release from the cell (Potential). Cleaves the translation initiation factor eIF4G leading to the inhibition of host cap-dependent translation. This is Gag-Pro polyprotein (gag-pro) from Human T-cell leukemia virus 1 (isolate Caribbea HS-35 subtype A) (HTLV-1).